The primary structure comprises 1218 residues: Chitin synthase 4 (1218 aa).

2 disordered regions span residues 1-93 (MAEP…PERN) and 132-190 (TVSS…RRQK). Residues 14–34 (TRDKSHSPYRESPSRRLRDVE) are compositionally biased toward basic and acidic residues. Asparagine 50 carries an N-linked (GlcNAc...) asparagine glycan. Polar residues-rich tracts occupy residues 71–80 (SNPNPMSQSD) and 133–142 (VSSGSTQQDT). The segment covering 175–190 (RKDTRNLTEEEKRRQK) has biased composition (basic and acidic residues). Residue asparagine 180 is glycosylated (N-linked (GlcNAc...) asparagine). 2 helical membrane passes run 200–220 (IWNIYCAVVTFWAPDCLLQCF) and 235–255 (VGLISIILLIAAFVGFLTFGF). N-linked (GlcNAc...) asparagine glycosylation is found at asparagine 365, asparagine 404, and asparagine 426. A helical transmembrane segment spans residues 487-507 (VVLYVSLVFILAIVAAKFFLA). 2 disordered regions span residues 548-570 (PKITDPASTVTGSDGRTSKRGSM) and 582-606 (YAVDRRSSRPPPTTMTSQSSNAKLL). The segment covering 553-562 (PASTVTGSDG) has biased composition (polar residues). Residues asparagine 617, asparagine 903, and asparagine 1030 are each glycosylated (N-linked (GlcNAc...) asparagine). Helical transmembrane passes span 1062 to 1082 (IGTLVLPAAISFTFYLIIISI), 1087 to 1107 (VPVIPLVLLALILGLPAILIV), and 1115 to 1135 (YILWMGIYLLSLPIWNFVLPA). The tract at residues 1188–1218 (QANGSVWNQQPPTRPPSGYGSMHGFEPYRDY) is disordered. Residues 1189 to 1198 (ANGSVWNQQP) show a composition bias toward polar residues. Asparagine 1190 carries an N-linked (GlcNAc...) asparagine glycan.

Belongs to the chitin synthase family. Class IV subfamily. In terms of processing, maximal activity requires trypsin activation, suggesting a zymogenic nature.

The protein localises to the cell membrane. It carries out the reaction [(1-&gt;4)-N-acetyl-beta-D-glucosaminyl](n) + UDP-N-acetyl-alpha-D-glucosamine = [(1-&gt;4)-N-acetyl-beta-D-glucosaminyl](n+1) + UDP + H(+). Its activity is regulated as follows. Activity is stimulated by Mg(2+), and is more inhibited by polyoxin D than by nikkomycin. Functionally, polymerizes chitin, a structural polymer of the cell wall and septum, by transferring the sugar moiety of UDP-GlcNAc to the non-reducing end of the growing chitin polymer. CHS4 synthesizes a large amount of chitin and appears to play a role in the process of cell separation. CHS4 is particularly well suited for functioning at the higher temperatures associated with its poorly characterized saprophic environment and with human infection. This chain is Chitin synthase 4, found in Exophiala dermatitidis (strain ATCC 34100 / CBS 525.76 / NIH/UT8656) (Black yeast).